Here is a 298-residue protein sequence, read N- to C-terminus: Epimerase family protein SSP1921 (298 aa).

Belongs to the NAD(P)-dependent epimerase/dehydratase family. SDR39U1 subfamily.

This is Epimerase family protein SSP1921 from Staphylococcus saprophyticus subsp. saprophyticus (strain ATCC 15305 / DSM 20229 / NCIMB 8711 / NCTC 7292 / S-41).